The chain runs to 359 residues: Serine/threonine-protein kinase SAPK7 (359 aa).

The Protein kinase domain maps to 4-260; sequence YELLKDIGAG…IREIRNHPWF (257 aa). ATP contacts are provided by residues 10–18 and lysine 33; that span reads IGAGNFGVA. Aspartate 123 functions as the Proton acceptor in the catalytic mechanism. A disordered region spans residues 299-359; that stretch reads EEARTPPRSS…VHASGEFQLS (61 aa). Residues 331 to 343 show a composition bias toward acidic residues; sequence EEQEEEEDAEDEY.

Belongs to the protein kinase superfamily. Ser/Thr protein kinase family. In terms of processing, may be phosphorylated. Weakly expressed in roots. Expressed in roots of young seedlings.

The protein resides in the cytoplasm. The protein localises to the nucleus. The catalysed reaction is L-seryl-[protein] + ATP = O-phospho-L-seryl-[protein] + ADP + H(+). The enzyme catalyses L-threonyl-[protein] + ATP = O-phospho-L-threonyl-[protein] + ADP + H(+). With respect to regulation, activated by hyperosmotic stress. In terms of biological role, may play a role in signal transduction of hyperosmotic response. The chain is Serine/threonine-protein kinase SAPK7 (SAPK7) from Oryza sativa subsp. japonica (Rice).